The primary structure comprises 585 residues: Protein FAM13C (585 aa).

Disordered stretches follow at residues 26–45, 83–138, and 171–216; these read PVSL…ENNK, SMGN…NAFK, and EAAQ…APED. Composition is skewed to basic and acidic residues over residues 27-45 and 99-112; these read VSLH…ENNK and ESGR…ETEH. Residue Ser131 is modified to Phosphoserine. Residue Ser238 is modified to Phosphoserine. Disordered regions lie at residues 250 to 282, 349 to 391, and 441 to 477; these read FNLD…DGKE, EEQG…EETP, and IPTI…DHLT. Residues 262–275 show a composition bias toward polar residues; sequence STQQFMMPRSSSRC. Phosphoserine is present on residues Ser385 and Ser386.

The protein belongs to the FAM13 family.

This Homo sapiens (Human) protein is Protein FAM13C (FAM13C).